Consider the following 302-residue polypeptide: MKTHQFSTALFSDYKQGDSFNFPCPAKLNLFLYINGRRTDGYHELQTLFQFLDYGDWLSIKVRNDGKIRLTPEIPDLKTEDNLIYRAAKLLQQKTACRLGADLHLDKVLPMGGGVGGGSSNAATALVALNYLWKTGLSVNELAELGLKLGADVPIFVHGKAAFAEGVGEKITYCEPPEKWYAVIKPNVSISTAKVFSEPDLTRDTKKKPLEQLLQQEYTNDCEKVVRKLYPEVEELLRWLVKYAPSRLTGSGACVFAEFADEQSAQTVFNLKSKQFSGFVAQGLNVSPLHKMLEQLNRQNHG.

The active site involves lysine 27. Residue proline 110–serine 120 coordinates ATP. The active site involves aspartate 152.

Belongs to the GHMP kinase family. IspE subfamily.

It catalyses the reaction 4-CDP-2-C-methyl-D-erythritol + ATP = 4-CDP-2-C-methyl-D-erythritol 2-phosphate + ADP + H(+). The protein operates within isoprenoid biosynthesis; isopentenyl diphosphate biosynthesis via DXP pathway; isopentenyl diphosphate from 1-deoxy-D-xylulose 5-phosphate: step 3/6. Its function is as follows. Catalyzes the phosphorylation of the position 2 hydroxy group of 4-diphosphocytidyl-2C-methyl-D-erythritol. This Mannheimia succiniciproducens (strain KCTC 0769BP / MBEL55E) protein is 4-diphosphocytidyl-2-C-methyl-D-erythritol kinase.